Reading from the N-terminus, the 853-residue chain is Thrombospondin type-1 domain-containing protein 1 (853 aa).

The N-terminal stretch at 1–24 (MKPMLKDFSNLLLVVLCDYVLGEA) is a signal peptide. At 25–414 (EYLLLREPGH…QPQGPVKSNN (390 aa)) the chain is on the extracellular side. Residues N39, N53, N58, N69, N80, N135, and N304 are each glycosylated (N-linked (GlcNAc...) asparagine). A TSP type-1 domain is found at 341–394 (IETWGLWQPWSQCSATCGDGVRERRRVCLTSFPSRPGCPGMSLEASLCSLEECA). Cystine bridges form between C353/C388, C357/C393, and C368/C378. Residues 415-435 (IVTVTGISLCLFIIIATVLIT) traverse the membrane as a helical segment. Residues 436-853 (LWRRFGRPAK…STLSVEKLVI (418 aa)) lie on the Cytoplasmic side of the membrane. Disordered regions lie at residues 445-518 (KCST…ESFQ), 624-650 (TLIR…RNAH), 668-702 (ERSM…QSRG), and 714-800 (QEAS…RKDK). The residue at position 464 (S464) is a Phosphoserine. Polar residues predominate over residues 671 to 686 (MSTLTPRQAPAYSTRT). The span at 687-697 (RTCEQAEDRFR) shows a compositional bias: basic and acidic residues. Residues 767 to 795 (SHKSVSRKQSSPTSPKDSYQRVSPLSPSQ) show a composition bias toward polar residues.

In terms of assembly, part of a complex composed of THSD1, PTK2/FAK1, TLN1 and VCL. Interacts with TLN1.

Its subcellular location is the endosome membrane. The protein resides in the cell junction. It is found in the focal adhesion. Is a positive regulator of nascent focal adhesion assembly, involved in the modulation of endothelial cell attachment to the extracellular matrix. The polypeptide is Thrombospondin type-1 domain-containing protein 1 (THSD1) (Pongo abelii (Sumatran orangutan)).